Reading from the N-terminus, the 250-residue chain is 2,3-bisphosphoglycerate-dependent phosphoglycerate mutase (250 aa).

Substrate contacts are provided by residues 12–19, 25–26, Arg64, 91–94, Lys102, 118–119, and 185–186; these read RHGQSAWN, TG, ERHY, RR, and GN. Residue His13 is the Tele-phosphohistidine intermediate of the active site. Residue Glu91 is the Proton donor/acceptor of the active site.

The protein belongs to the phosphoglycerate mutase family. BPG-dependent PGAM subfamily.

It catalyses the reaction (2R)-2-phosphoglycerate = (2R)-3-phosphoglycerate. Its pathway is carbohydrate degradation; glycolysis; pyruvate from D-glyceraldehyde 3-phosphate: step 3/5. In terms of biological role, catalyzes the interconversion of 2-phosphoglycerate and 3-phosphoglycerate. This chain is 2,3-bisphosphoglycerate-dependent phosphoglycerate mutase, found in Corynebacterium efficiens (strain DSM 44549 / YS-314 / AJ 12310 / JCM 11189 / NBRC 100395).